Consider the following 189-residue polypeptide: dCTP deaminase (189 aa).

DCTP-binding positions include 112–117, 136–138, Gln157, Tyr171, and Gln181; these read KSTYAR and TLE. Glu138 (proton donor/acceptor) is an active-site residue.

This sequence belongs to the dCTP deaminase family. Homotrimer.

It catalyses the reaction dCTP + H2O + H(+) = dUTP + NH4(+). The protein operates within pyrimidine metabolism; dUMP biosynthesis; dUMP from dCTP (dUTP route): step 1/2. Its function is as follows. Catalyzes the deamination of dCTP to dUTP. In Leptothrix cholodnii (strain ATCC 51168 / LMG 8142 / SP-6) (Leptothrix discophora (strain SP-6)), this protein is dCTP deaminase.